Reading from the N-terminus, the 124-residue chain is Small ribosomal subunit protein uS12 (124 aa).

D89 is subject to 3-methylthioaspartic acid.

The protein belongs to the universal ribosomal protein uS12 family. As to quaternary structure, part of the 30S ribosomal subunit. Contacts proteins S8 and S17. May interact with IF1 in the 30S initiation complex.

Its function is as follows. With S4 and S5 plays an important role in translational accuracy. In terms of biological role, interacts with and stabilizes bases of the 16S rRNA that are involved in tRNA selection in the A site and with the mRNA backbone. Located at the interface of the 30S and 50S subunits, it traverses the body of the 30S subunit contacting proteins on the other side and probably holding the rRNA structure together. The combined cluster of proteins S8, S12 and S17 appears to hold together the shoulder and platform of the 30S subunit. This is Small ribosomal subunit protein uS12 from Shewanella putrefaciens (strain CN-32 / ATCC BAA-453).